Consider the following 166-residue polypeptide: Small ribosomal subunit protein uS5 (166 aa).

Positions 12–75 constitute an S5 DRBM domain; the sequence is YIEKLVQVNR…EAARRNMIQV (64 aa).

It belongs to the universal ribosomal protein uS5 family. In terms of assembly, part of the 30S ribosomal subunit. Contacts proteins S4 and S8.

Functionally, with S4 and S12 plays an important role in translational accuracy. Located at the back of the 30S subunit body where it stabilizes the conformation of the head with respect to the body. This chain is Small ribosomal subunit protein uS5, found in Pseudomonas fluorescens (strain SBW25).